The primary structure comprises 1488 residues: MSIPENAIAVVGMAGRFPGAKDVSAFWSNLRRGKESIVTLSEQELRDAGVSDKTLADPAYVRRAPLLDGIDEFDAGFFGFPPLAAQVLDPQHRLFLQCAWHALEDAGADPARFDGSIGVYGTSSPSGYLLHNLLSHRDPNAVLAEGLNFDQFSLFLQNDKDFLATRISHAFNLRGPSIAVQTACSSSLVAVHLACLSLLSGECDMALAGGSSLCIPHRVGYFTSPGSMVSAVGHCRPFDVRADGTVFGSGVGLVVLKPLAAAIDAGDRIHAVIRGSAINNDGSAKMGYAAPNPAAQADVIAEAHAVSGIDSSTVSYVECHGTGTPLGDPIEIQGLRAAFEVSQTSRSAPCVLGSVKSNIGHLEVAAGIAGLIKTILCLKNKALPATLHYTSPNPELRLDQSPFVVQSKYGPWECDGVRRAGVSSFGVGGTNAHVVLEEAPAEASEVSAHAEPAGPQVILLSAQTAAALGESRTALAAALETQDGPRLSDVAYTLARRRKHNVTMAAVVHDREHAATVLRAAEHDNVFVGEAAHDGEHGDRADAAPTSDRVVFLFPGQGAQHVGMAKGLYDTEPVFAQHFDTCAAGFRDETGIDLHAEVFDGTATDLERIDRSQPALFTVEYALAKLVDTFGVRAGAYIGYSTGEYIAATLAGVFDLQTAIKTVSLRARLMHESPPGAMVAVALGPDDVTQYLPPEVELSAVNDPGNCVVAGPKDQIRALRQRLTEAGIPVRRVRATHAFHTSAMDPMLGQFQEFLSRQQLRPPRTPLLSNLTGSWMSDQQVVDPASWTRQISSPIRFADELDVVLAAPSRILVEVGPGGSLTGSAMRHPKWSTTHRTVRLMRHPLQDVDDRDTFLRALGELWSAGVEVDWTPRRPAVPHLVSLPGYPFARQRHWVEPNHTVWAQAPGANNGSPAGTADGSTAATVDAARNGESQTEVTLQRIWSQCLGVSSVDRNANFFDLGGDSLMAISIAMAAANEGLTITPQDLYEYPTLASLTAAVDASFASSGLAKPPEAQANPAVPPNVTYFLDRGLRDTGRCRVPLILRLDPKIGLPDIRAVLTAVVNHHDALRLHLVGNDGIWEQHIAAPAEFTGLSNRSVPDGVAAGSPEERAAVLGILAELLEDQTDPNAPLAAVHIAAAHGGPHYLCLAIHAMVTDDSSRQILATDIVTAFGQRLAGEEITLEPVSTGWREWSLRCAALATHPAALDTRSYWIENSTKATLWLADALPNAHTAHPPRADELTKLSSTLSVEQTSELDDGRRRFRRSIQTILLAALGRTIAQTVGEGVVAVELEGEGRSVLRPDVDLRRTVGWFTTYYPVPLACATGLGALAQLDAVHNTLKSVPHYGIGYGLLRYVYAPTGRVLGAQRTPDIHFRYAGVIPELPSGDAPVQFDSDMTLPVREPIPGMGHAIELRVYRFGGSLHLDWWYDTRRIPAATAEALERTFPLALSALIQEAIAAEHTEHDDSEIVGEPEAGALVDLSSMDAG.

The region spanning 5-438 (ENAIAVVGMA…GTNAHVVLEE (434 aa)) is the Ketosynthase family 3 (KS3) domain. Active-site for beta-ketoacyl synthase activity residues include Cys184, His320, and His361. The tract at residues 551 to 868 (VFLFPGQGAQ…GELWSAGVEV (318 aa)) is acyltransferase. The active-site For malonyltransferase activity is Ser641. One can recognise a Carrier domain in the interval 930–1004 (NGESQTEVTL…SLTAAVDASF (75 aa)). At Ser965 the chain carries O-(pantetheine 4'-phosphoryl)serine. 1286–1331 (EGVVAVELEGEGRSVLRPDVDLRRTVGWFTTYYPVPLACATGLGAL) serves as a coordination point for NADP(+).

It depends on NADP(+) as a cofactor. Pantetheine 4'-phosphate is required as a cofactor.

The enzyme catalyses icosanoyl-[(phenol)carboxyphthiodiolenone synthase] + 2 (S)-methylmalonyl-CoA + 3 malonyl-CoA + 5 NADPH + 10 H(+) = C32-carboxyphthiodiolenone-[(phenol)carboxyphthiodiolenone synthase] + 5 CO2 + 5 NADP(+) + 5 CoA + 2 H2O. It carries out the reaction docosanoyl-[(phenol)carboxyphthiodiolenone synthase] + 2 (S)-methylmalonyl-CoA + 3 malonyl-CoA + 5 NADPH + 10 H(+) = C34-carboxyphthiodiolenone-[(phenol)carboxyphthiodiolenone synthase] + 5 CO2 + 5 NADP(+) + 5 CoA + 2 H2O. The catalysed reaction is 17-(4-hydroxyphenyl)heptadecanoyl-[(phenol)carboxyphthiodiolenone synthase] + 2 (S)-methylmalonyl-CoA + 3 malonyl-CoA + 5 NADPH + 10 H(+) = C35-(phenol)carboxyphthiodiolenone-[(phenol)carboxyphthiodiolenone synthase] + 5 CO2 + 5 NADP(+) + 5 CoA + 2 H2O. It catalyses the reaction 19-(4-hydroxyphenyl)nonadecanoyl-[(phenol)carboxyphthiodiolenone synthase] + 2 (S)-methylmalonyl-CoA + 3 malonyl-CoA + 5 NADPH + 10 H(+) = C37-(phenol)carboxyphthiodiolenone-[(phenol)carboxyphthiodiolenone synthase] + 5 CO2 + 5 NADP(+) + 5 CoA + 2 H2O. The protein operates within lipid metabolism; fatty acid biosynthesis. Its function is as follows. Part of the PpsABCDE complex involved in the biosynthesis of the lipid core common to phthiocerols and phenolphthiocerols by successive additions of malonyl-CoA or methylmalonyl-CoA extender units. PpsA can accept as substrate the activated forms of either icosanoyl (C20), docosanoyl (C22) or lignoceroyl (C24) groups from FadD26, or a (4-hydroxyphenyl)-C17 or (4-hydroxyphenyl)-C19 fatty acyl from FadD29. PpsA initiates the biosynthesis and extends its substrate using a malonyl-CoA extender unit. The PpsB and PpsC proteins add the second and third malonyl-CoA extender units. PpsD adds an (R)-methylmalonyl unit and PpsE adds a second (R)-methylmalonyl unit. The incorporation of the methylmalonyl units results in formation of two branched methyl groups in the elongated product. This is Phenolphthiocerol/phthiocerol polyketide synthase subunit E (ppsE) from Mycobacterium bovis (strain ATCC BAA-935 / AF2122/97).